Here is a 432-residue protein sequence, read N- to C-terminus: Glutamyl-tRNA reductase (432 aa).

Substrate contacts are provided by residues 49–52 (TCNR), S101, 106–108 (ESQ), and Q112. C50 functions as the Nucleophile in the catalytic mechanism. 181-186 (GAGETI) serves as a coordination point for NADP(+). The disordered stretch occupies residues 410-432 (KPGYHHPTLQTTIVKTDETDPAS).

The protein belongs to the glutamyl-tRNA reductase family. As to quaternary structure, homodimer.

The catalysed reaction is (S)-4-amino-5-oxopentanoate + tRNA(Glu) + NADP(+) = L-glutamyl-tRNA(Glu) + NADPH + H(+). It functions in the pathway porphyrin-containing compound metabolism; protoporphyrin-IX biosynthesis; 5-aminolevulinate from L-glutamyl-tRNA(Glu): step 1/2. Catalyzes the NADPH-dependent reduction of glutamyl-tRNA(Glu) to glutamate 1-semialdehyde (GSA). This Xylella fastidiosa (strain M23) protein is Glutamyl-tRNA reductase.